We begin with the raw amino-acid sequence, 156 residues long: Transcriptional repressor NrdR (156 aa).

Residues 3-34 (CPFCGNVDTQVKDSRPAEDHVAIRRRRFCPAC) fold into a zinc finger. One can recognise an ATP-cone domain in the interval 49–139 (LVVIKSNGKR…VYKNFQATGD (91 aa)).

The protein belongs to the NrdR family. The cofactor is Zn(2+).

In terms of biological role, negatively regulates transcription of bacterial ribonucleotide reductase nrd genes and operons by binding to NrdR-boxes. This chain is Transcriptional repressor NrdR, found in Jannaschia sp. (strain CCS1).